Here is a 296-residue protein sequence, read N- to C-terminus: Lipoyl synthase (296 aa).

[4Fe-4S] cluster-binding residues include Cys-37, Cys-42, Cys-48, Cys-63, Cys-67, Cys-70, and Ser-276. The Radical SAM core domain maps to 49 to 265; it reads WSKKHTTVMI…ERVAKTKGFL (217 aa).

It belongs to the radical SAM superfamily. Lipoyl synthase family. Requires [4Fe-4S] cluster as cofactor.

The protein resides in the cytoplasm. The enzyme catalyses [[Fe-S] cluster scaffold protein carrying a second [4Fe-4S](2+) cluster] + N(6)-octanoyl-L-lysyl-[protein] + 2 oxidized [2Fe-2S]-[ferredoxin] + 2 S-adenosyl-L-methionine + 4 H(+) = [[Fe-S] cluster scaffold protein] + N(6)-[(R)-dihydrolipoyl]-L-lysyl-[protein] + 4 Fe(3+) + 2 hydrogen sulfide + 2 5'-deoxyadenosine + 2 L-methionine + 2 reduced [2Fe-2S]-[ferredoxin]. Its pathway is protein modification; protein lipoylation via endogenous pathway; protein N(6)-(lipoyl)lysine from octanoyl-[acyl-carrier-protein]: step 2/2. Its function is as follows. Catalyzes the radical-mediated insertion of two sulfur atoms into the C-6 and C-8 positions of the octanoyl moiety bound to the lipoyl domains of lipoate-dependent enzymes, thereby converting the octanoylated domains into lipoylated derivatives. This is Lipoyl synthase from Rickettsia massiliae (strain Mtu5).